The chain runs to 151 residues: MRTFESVADLAAAAGEKVGQSDWVTITQEEVNLFADATGDHQWIHVDPERAAAGPFGTTIAHGFMTLALLPRLQHQMYTVKGVKLAINYGLNKVRFPAPVPVGSRVRATSSLVGVEDLGNGTVQATVSTTVEVEGSAKPACVAESIVRYVA.

In terms of domain architecture, MaoC-like spans 11–131; that stretch reads AAAAGEKVGQ…TVQATVSTTV (121 aa). Residues 60–63, 86–89, 97–99, Q124, and R148 contribute to the substrate site; these read IAHG, AINY, and PAP.

The protein belongs to the enoyl-CoA hydratase/isomerase family. In terms of assembly, homodimer.

The enzyme catalyses a (3R)-3-hydroxyacyl-CoA = a (2E)-enoyl-CoA + H2O. In terms of biological role, shows trans-enoyl-CoA hydratase/3-hydroxyacyl-CoA dehydratase activity. In Mycobacterium bovis (strain ATCC BAA-935 / AF2122/97), this protein is 3-hydroxyacyl-thioester dehydratase Z.